Consider the following 262-residue polypeptide: ATP synthase subunit a (262 aa).

A run of 6 helical transmembrane segments spans residues 50–70 (TMIM…ACTK), 107–127 (MMPI…LGLI), 141–161 (FGLA…ANGV), 194–214 (LYGN…LINI), 218–238 (VFGG…VGFV), and 239–259 (QAFV…AHEA).

It belongs to the ATPase A chain family. In terms of assembly, F-type ATPases have 2 components, CF(1) - the catalytic core - and CF(0) - the membrane proton channel. CF(1) has five subunits: alpha(3), beta(3), gamma(1), delta(1), epsilon(1). CF(0) has three main subunits: a(1), b(2) and c(9-12). The alpha and beta chains form an alternating ring which encloses part of the gamma chain. CF(1) is attached to CF(0) by a central stalk formed by the gamma and epsilon chains, while a peripheral stalk is formed by the delta and b chains.

The protein resides in the cell membrane. Key component of the proton channel; it plays a direct role in the translocation of protons across the membrane. The sequence is that of ATP synthase subunit a from Desulforamulus reducens (strain ATCC BAA-1160 / DSM 100696 / MI-1) (Desulfotomaculum reducens).